Reading from the N-terminus, the 252-residue chain is Small ribosomal subunit protein uS3 (252 aa).

The KH type-2 domain occupies 38–106 (IRKYIHARLS…EVQINIFEIK (69 aa)). Residues 214–252 (PLAGMDKKQSGTGGGKGGDAPRGKSNFNKGGKPDARKRK) are disordered. Positions 224–233 (GTGGGKGGDA) are enriched in gly residues.

It belongs to the universal ribosomal protein uS3 family. Part of the 30S ribosomal subunit. Forms a tight complex with proteins S10 and S14.

In terms of biological role, binds the lower part of the 30S subunit head. Binds mRNA in the 70S ribosome, positioning it for translation. This is Small ribosomal subunit protein uS3 from Flavobacterium johnsoniae (strain ATCC 17061 / DSM 2064 / JCM 8514 / BCRC 14874 / CCUG 350202 / NBRC 14942 / NCIMB 11054 / UW101) (Cytophaga johnsonae).